Here is a 118-residue protein sequence, read N- to C-terminus: Small ribosomal subunit protein uS13 (118 aa).

The segment at 94–118 is disordered; sequence SLPLRGQRTKTNARTRKGPRKPIKK.

This sequence belongs to the universal ribosomal protein uS13 family. In terms of assembly, part of the 30S ribosomal subunit. Forms a loose heterodimer with protein S19. Forms two bridges to the 50S subunit in the 70S ribosome.

Located at the top of the head of the 30S subunit, it contacts several helices of the 16S rRNA. In the 70S ribosome it contacts the 23S rRNA (bridge B1a) and protein L5 of the 50S subunit (bridge B1b), connecting the 2 subunits; these bridges are implicated in subunit movement. Contacts the tRNAs in the A and P-sites. This is Small ribosomal subunit protein uS13 from Vibrio parahaemolyticus serotype O3:K6 (strain RIMD 2210633).